The following is a 73-amino-acid chain: Small, acid-soluble spore protein C2 (73 aa).

Belongs to the alpha/beta-type SASP family.

In terms of biological role, SASP are bound to spore DNA. They are double-stranded DNA-binding proteins that cause DNA to change to an a-like conformation. They protect the DNA backbone from chemical and enzymatic cleavage and are thus involved in dormant spore's high resistance to UV light. The chain is Small, acid-soluble spore protein C2 (SASP-C2) from Priestia megaterium (Bacillus megaterium).